The following is a 100-amino-acid chain: Non-histone chromosomal protein HMG-14 (100 aa).

Positions 1 to 100 (MPKRKVSSAE…EAGEKEAKSD (100 aa)) are disordered. Ser-7 is modified (ADP-ribosylserine). Ser-8 carries the phosphoserine modification. The residue at position 14 (Lys-14) is an N6-acetyllysine. The residue at position 21 (Ser-21) is a Phosphoserine; by RPS6KA5. Position 25 is an ADP-ribosylserine; alternate (Ser-25). Ser-25 is subject to Phosphoserine; alternate; by RPS6KA5. At Lys-27 the chain carries N6-acetyllysine. Composition is skewed to basic and acidic residues over residues 30-50 (AKVE…DKKV) and 69-85 (ETKE…KTEE). At Thr-81 the chain carries Phosphothreonine. Residue Lys-82 is modified to N6-acetyllysine. Phosphoserine is present on residues Ser-86, Ser-89, and Ser-99.

In terms of assembly, interacts with transcriptional regulator SEHBP. In terms of processing, phosphorylation on Ser-21 and Ser-25 weakens binding to nucleosomes and increases the rate of H3 phosphorylation. Phosphorylation favors cytoplasmic localization.

The protein localises to the nucleus. It localises to the cytoplasm. In terms of biological role, binds to the inner side of the nucleosomal DNA thus altering the interaction between the DNA and the histone octamer. May be involved in the process which maintains transcribable genes in a unique chromatin conformation. Inhibits the phosphorylation of nucleosomal histones H3 and H2A by RPS6KA5/MSK1 and RPS6KA3/RSK2. This chain is Non-histone chromosomal protein HMG-14 (HMGN1), found in Homo sapiens (Human).